The sequence spans 32 residues: Protamine-3A (32 aa).

The segment at 1-32 is disordered; sequence PRRRRRSSSRPIRRRRRPRVSRRRRRGGRRRR.

As to expression, testis.

It localises to the nucleus. It is found in the chromosome. In terms of biological role, protamines substitute for histones in the chromatin of sperm during the haploid phase of spermatogenesis. They compact sperm DNA into a highly condensed, stable and inactive complex. The protein is Protamine-3A of Oncorhynchus mykiss (Rainbow trout).